The chain runs to 436 residues: Probable G-protein coupled receptor C06G4.5 (436 aa).

The Extracellular segment spans residues 1–53; that stretch reads MSTNLVDYVDDSYLNQSMNSENGLDSVTQIMYDMKKYNIVNDVLPPPNHEDLH. A glycan (N-linked (GlcNAc...) asparagine) is linked at Asn-15. Residues 54–74 form a helical membrane-spanning segment; that stretch reads VVIMAVSYLLLFLLGTCGNVA. Topologically, residues 75–94 are cytoplasmic; it reads VLTTIYHVIRSSRATLDNTL. A helical transmembrane segment spans residues 95 to 115; it reads IYVIVLSCVDFGVCLSLPITV. The Extracellular portion of the chain corresponds to 116 to 132; the sequence is IDQILGFWMFGKIPCKL. Residues 133–153 traverse the membrane as a helical segment; sequence HAVFENFGKILSALILTAMSF. The Cytoplasmic segment spans residues 154–171; it reads DRYAGVCHPQRKRLRSRN. Residues 172–192 form a helical membrane-spanning segment; it reads FAITILLVLAVYAFITLCPLL. Over 193–230 the chain is Extracellular; sequence WSFTAREIILYAKETAPGMLTRMKIEKCTVDIDSQMFT. A helical membrane pass occupies residues 231–251; it reads AFTIYQFILCYCTPLVLIAFF. Residues 252-281 lie on the Cytoplasmic side of the membrane; that stretch reads YTKLLSKLREHTRTFKSSQIPFLHISLYTL. The helical transmembrane segment at 282-302 threads the bilayer; that stretch reads AVACFYFLCWTPFWMATLFAV. Residues 303–316 are Extracellular-facing; that stretch reads YLENSANSSSVPPV. N-linked (GlcNAc...) asparagine glycosylation occurs at Asn-309. A helical transmembrane segment spans residues 317 to 337; it reads FVYIMYFIHALPFTNSAINWI. Over 338-436 the chain is Cytoplasmic; the sequence is LYGALNGQLQ…LLSNHNPTFL (99 aa).

This sequence belongs to the G-protein coupled receptor 1 family.

Its subcellular location is the cell membrane. In terms of biological role, putative receptor. This Caenorhabditis elegans protein is Probable G-protein coupled receptor C06G4.5.